Consider the following 247-residue polypeptide: Coproheme decarboxylase (247 aa).

Residues R129, 143–147 (YPMDK), H170, Q183, and S221 each bind Fe-coproporphyrin III. Y143 is an active-site residue.

Belongs to the ChdC family. Type 1 subfamily. Fe-coproporphyrin III is required as a cofactor.

It catalyses the reaction Fe-coproporphyrin III + 2 H2O2 + 2 H(+) = heme b + 2 CO2 + 4 H2O. It carries out the reaction Fe-coproporphyrin III + H2O2 + H(+) = harderoheme III + CO2 + 2 H2O. The catalysed reaction is harderoheme III + H2O2 + H(+) = heme b + CO2 + 2 H2O. Its pathway is porphyrin-containing compound metabolism; protoheme biosynthesis. In terms of biological role, involved in coproporphyrin-dependent heme b biosynthesis. Catalyzes the decarboxylation of Fe-coproporphyrin III (coproheme) to heme b (protoheme IX), the last step of the pathway. The reaction occurs in a stepwise manner with a three-propionate intermediate. This chain is Coproheme decarboxylase, found in Bacillus cytotoxicus (strain DSM 22905 / CIP 110041 / 391-98 / NVH 391-98).